Consider the following 598-residue polypeptide: Probable transporter mch1 (598 aa).

Residues 1–49 (MASPTPAPRPDQISASTPLLQSDSTSSCASSIRSLSPSRRRHRNGRTSP) form a disordered region. Residues 22 to 37 (SDSTSSCASSIRSLSP) show a composition bias toward low complexity. N57 is a glycosylation site (N-linked (GlcNAc...) asparagine). Transmembrane regions (helical) follow at residues 63–83 (ALLSSLCAGSITIFSMYGHIF), 96–116 (GLSSAASFATYMPVPLLGYMC), 122–142 (GPLSFVSALFFAAGYGLAAGV), 164–184 (LAYAAMITAFVFIGVGTCSMY), 202–222 (GLALAVPIAAFGLSGMWQSQL), and 241–261 (VFHFFIFLGVLLFVVGCLGTF). Residues 315–334 (AGILDPSKPDNDSDSEEEDD) are disordered. The N-linked (GlcNAc...) asparagine glycan is linked to N325. Transmembrane regions (helical) follow at residues 355–375 (HTMWCFALGFFLMIGPGEAFI), 405–425 (IVGITSTLVRLLTGSLTDLLA), 453–473 (FLLFFAVTLSVGLATLASGWI), 486–506 (LVGAGYGAVFSLTPIIITVIW), 516–536 (GIVAMFPALGATFWGLVYSAV), and 565–585 (SAFWAMAASVWVACGLVLWAW).

The protein belongs to the major facilitator superfamily.

It localises to the vacuole membrane. Probable transporter. The chain is Probable transporter mch1 (mch1) from Neurospora crassa (strain ATCC 24698 / 74-OR23-1A / CBS 708.71 / DSM 1257 / FGSC 987).